The primary structure comprises 291 residues: Porphobilinogen deaminase (291 aa).

C237 bears the S-(dipyrrolylmethanemethyl)cysteine mark.

It belongs to the HMBS family. As to quaternary structure, monomer. Dipyrromethane is required as a cofactor.

The enzyme catalyses 4 porphobilinogen + H2O = hydroxymethylbilane + 4 NH4(+). It functions in the pathway porphyrin-containing compound metabolism; protoporphyrin-IX biosynthesis; coproporphyrinogen-III from 5-aminolevulinate: step 2/4. Functionally, tetrapolymerization of the monopyrrole PBG into the hydroxymethylbilane pre-uroporphyrinogen in several discrete steps. This chain is Porphobilinogen deaminase, found in Clostridium perfringens (strain 13 / Type A).